Consider the following 253-residue polypeptide: Trans-aconitate 2-methyltransferase (253 aa).

Belongs to the methyltransferase superfamily. Tam family.

The protein localises to the cytoplasm. It catalyses the reaction trans-aconitate + S-adenosyl-L-methionine = (E)-3-(methoxycarbonyl)pent-2-enedioate + S-adenosyl-L-homocysteine. In terms of biological role, catalyzes the S-adenosylmethionine monomethyl esterification of trans-aconitate. The chain is Trans-aconitate 2-methyltransferase from Azoarcus sp. (strain BH72).